We begin with the raw amino-acid sequence, 152 residues long: Large ribosomal subunit protein bL9 (152 aa).

The protein belongs to the bacterial ribosomal protein bL9 family.

In terms of biological role, binds to the 23S rRNA. The sequence is that of Large ribosomal subunit protein bL9 from Mycobacterium marinum (strain ATCC BAA-535 / M).